We begin with the raw amino-acid sequence, 417 residues long: MTKEKIVLAYSGGLDTSVAVKWLQDKYNYDVIAVALDVGEGKDLDFVKKKALDVGAIKSYVIDAKNLFAEEYVLPALQANLLYEGKYPLISALSRPLISKILVDIAEEEGAVAVAHGCTGKGNDQVRFDVSFTALNPNLKIVAPVREWAMSREEEIEYAKSHGIPIPINLDSPYSIDQNLWGRSNECGILEDPWAEAPKDAYDLTIDPVDAPEDPEVIQITFKKGKPVSIDGKEMPLDELILQLNTIAGKHGVGRIDHVENRLVGIKSREIYEAPAATTLIAAHQELEALTLPREVAEFKPTIEQKLAQTVYYGLWYSPLTEALQSFIEKTQEHVSGTVKVKLYKGHAQVIGRESENSLYDFDLATYNKADAFDHDAALGFIKLWGLPTQVHSAVNGPQGKKSIEKVDLEVKEAVKP.

Residue 9–17 participates in ATP binding; that stretch reads AYSGGLDTS. Y87 contributes to the L-citrulline binding site. G117 serves as a coordination point for ATP. L-aspartate contacts are provided by T119, N123, and D124. N123 is an L-citrulline binding site. The L-citrulline site is built by R127, S175, S184, E260, and Y272.

Belongs to the argininosuccinate synthase family. Type 1 subfamily. Homotetramer.

The protein localises to the cytoplasm. It carries out the reaction L-citrulline + L-aspartate + ATP = 2-(N(omega)-L-arginino)succinate + AMP + diphosphate + H(+). It participates in amino-acid biosynthesis; L-arginine biosynthesis; L-arginine from L-ornithine and carbamoyl phosphate: step 2/3. The protein is Argininosuccinate synthase of Oceanobacillus iheyensis (strain DSM 14371 / CIP 107618 / JCM 11309 / KCTC 3954 / HTE831).